The sequence spans 158 residues: Succinate dehydrogenase [ubiquinone] cytochrome b small subunit, mitochondrial (158 aa).

The transit peptide at 1-55 (MALWRLSVLCGAREGRALFLRTPVVRPALVSAFLQDRPAQGWCGTQHIHLSPSHH) directs the protein to the mitochondrion. Topologically, residues 56 to 62 (SGSKAAS) are mitochondrial matrix. A helical transmembrane segment spans residues 63–84 (LHWTGERVVSVLLLGLIPAAYL). Topologically, residues 85–89 (NPCSA) are mitochondrial intermembrane. The chain crosses the membrane as a helical span at residues 90-110 (MDYSLAATLTLHSHWGIGQVV). His101 serves as a coordination point for heme b. The Mitochondrial matrix segment spans residues 111 to 119 (TDYVHGDAV). Tyr113 contacts a ubiquinone. A helical transmembrane segment spans residues 120-141 (QKAAKTGLLVLSAFTFAGLCYF). Topologically, residues 142-158 (NYHDVGICKAVAMLWKL) are mitochondrial intermembrane.

The protein belongs to the CybS family. In terms of assembly, component of complex II composed of four subunits: the flavoprotein (FP) SDHA, iron-sulfur protein (IP) SDHB, and a cytochrome b560 composed of SDHC and SDHD.

It localises to the mitochondrion inner membrane. Its pathway is carbohydrate metabolism; tricarboxylic acid cycle. In terms of biological role, membrane-anchoring subunit of succinate dehydrogenase (SDH) that is involved in complex II of the mitochondrial electron transport chain and is responsible for transferring electrons from succinate to ubiquinone (coenzyme Q). SDH also oxidizes malate to the non-canonical enol form of oxaloacetate, enol-oxaloacetate. Enol-oxaloacetate, which is a potent inhibitor of the succinate dehydrogenase activity, is further isomerized into keto-oxaloacetate. This Bos taurus (Bovine) protein is Succinate dehydrogenase [ubiquinone] cytochrome b small subunit, mitochondrial (SDHD).